The chain runs to 188 residues: MAFSATQIRRGMVLVFEGDPCRVIEFRHHTPGNLRAMVQAKLKNLRTGSNFEHRFRAADTIVKADMETHELEFMYQGGDTYHFMNSENYDQLELDDEALGDSAPWMQPGLKILAEYYNGRPIGIQLPNSLVFEIVETAPVVRGATKTASSKPAKLENGVTVNVPEFVEQGTRVRVNPSTGEYLDRAKD.

Belongs to the elongation factor P family.

The protein resides in the cytoplasm. The protein operates within protein biosynthesis; polypeptide chain elongation. Its function is as follows. Involved in peptide bond synthesis. Stimulates efficient translation and peptide-bond synthesis on native or reconstituted 70S ribosomes in vitro. Probably functions indirectly by altering the affinity of the ribosome for aminoacyl-tRNA, thus increasing their reactivity as acceptors for peptidyl transferase. In Gemmatimonas aurantiaca (strain DSM 14586 / JCM 11422 / NBRC 100505 / T-27), this protein is Elongation factor P.